Reading from the N-terminus, the 329-residue chain is Trem-like transcript 2 protein (329 aa).

An N-terminal signal peptide occupies residues 1 to 24; that stretch reads MEPWPLTFLLLLLLLLWLQGCVSG. One can recognise an Ig-like V-type domain in the interval 25-126; the sequence is HSNENLYRKV…HFYPLVGFQL (102 aa). At 25–270 the chain is on the extracellular side; the sequence is HSNENLYRKV…NRSQETYIPA (246 aa). Cystine bridges form between C46–C110 and C61–C68. The tract at residues 202 to 259 is disordered; the sequence is FIDTSGTVTEPERNTESQPATLSPSNARSFSADPVTTSTMSRHQSSSLSTTGTCHPLT. Polar residues predominate over residues 217–259; it reads ESQPATLSPSNARSFSADPVTTSTMSRHQSSSLSTTGTCHPLT. N261 carries N-linked (GlcNAc...) asparagine glycosylation. Residues 271–291 form a helical membrane-spanning segment; sequence MVVVLTFLPAPVVLVVAYGFW. Topologically, residues 292–329 are cytoplasmic; the sequence is KKRHMGRYNLGSNYAKPWIHLPEGPETPWKPAWSKITQ.

As to quaternary structure, interacts with CD276 and this interaction enhances T-cell activation. As to expression, detected in B-lymphocytes and macrophages. Detected in spleen, lymph nodes, blood, bone marrow and cells from the peritoneal cavity (at protein level).

The protein resides in the cell membrane. Cell surface receptor that may play a role in the innate and adaptive immune response. Acts as a counter-receptor for CD276 and interaction with CD276 on T-cells enhances T-cell activation. This Mus musculus (Mouse) protein is Trem-like transcript 2 protein (Treml2).